The following is a 370-amino-acid chain: Capsular polysaccharide phosphotransferase (370 aa).

It belongs to the stealth family.

Part of a capsular polysaccharide synthesis locus. This is Capsular polysaccharide phosphotransferase from Actinobacillus suis.